A 33-amino-acid polypeptide reads, in one-letter code: Photosystem II reaction center protein Psb30 (33 aa).

Residues 5 to 25 (VIAQPIVLGLIVASGPLVIVS) form a helical membrane-spanning segment.

The protein belongs to the Psb30/Ycf12 family. As to quaternary structure, PSII is composed of 1 copy each of membrane proteins PsbA, PsbB, PsbC, PsbD, PsbE, PsbF, PsbH, PsbI, PsbJ, PsbK, PsbL, PsbM, PsbT, PsbX, PsbY, PsbZ, Psb30/Ycf12, peripheral proteins of the oxygen-evolving complex and a large number of cofactors. It forms dimeric complexes.

The protein localises to the plastid membrane. A core subunit of photosystem II (PSII), probably helps stabilize the reaction center. The polypeptide is Photosystem II reaction center protein Psb30 (Aneura mirabilis (Parasitic liverwort)).